The sequence spans 141 residues: ATP synthase epsilon chain (141 aa).

Belongs to the ATPase epsilon chain family. As to quaternary structure, F-type ATPases have 2 components, CF(1) - the catalytic core - and CF(0) - the membrane proton channel. CF(1) has five subunits: alpha(3), beta(3), gamma(1), delta(1), epsilon(1). CF(0) has three main subunits: a, b and c.

Its subcellular location is the cell inner membrane. Produces ATP from ADP in the presence of a proton gradient across the membrane. In Pseudomonas syringae pv. syringae (strain B728a), this protein is ATP synthase epsilon chain.